We begin with the raw amino-acid sequence, 507 residues long: Transmembrane protein 184 homolog DDB_G0276041 (507 aa).

Transmembrane regions (helical) follow at residues I13 to L33, I50 to F70, A88 to L108, L141 to L161, L179 to F199, V222 to L242, and F260 to S280. N-linked (GlcNAc...) asparagine glycosylation is found at N360, N375, N470, N473, N477, and N498. Positions N448–S500 are disordered. Positions S451 to S500 are enriched in low complexity.

This sequence belongs to the TMEM184 family.

It is found in the cell membrane. Probable transporter. This Dictyostelium discoideum (Social amoeba) protein is Transmembrane protein 184 homolog DDB_G0276041 (tmem184B).